The chain runs to 438 residues: Zinc finger protein 641 (438 aa).

The tract at residues 1-53 is disordered; sequence MQAEDRSQFGSAAEMLSEQTAALGTGWESMNVQLDGAEPQVERGSQEERPWRT. A compositionally biased stretch (polar residues) spans 17 to 32; the sequence is SEQTAALGTGWESMNV. Over residues 40–51 the composition is skewed to basic and acidic residues; sequence QVERGSQEERPW. Residues 109-181 enclose the KRAB domain; it reads VTIKDVSLCF…DPQDLEERDI (73 aa). The transactivation stretch occupies residues 171–265; sequence PDPQDLEERD…EMDSLLRPHT (95 aa). S191 is subject to Phosphoserine. C2H2-type zinc fingers lie at residues 264–286, 292–314, and 320–342; these read HTCP…QQTH, YSCL…QKTH, and SRCS…QRVH. The segment at 345–367 is disordered; that stretch reads GKSCKGQEVGESPGTRKRQRAPP. C2H2-type zinc fingers lie at residues 372-394 and 400-422; these read HVCT…WLTH and FQCP…LLTH. Residues 418–438 form a disordered region; sequence HLLTHQGQSPRNSWDRGTSVF. A compositionally biased stretch (polar residues) spans 422-438; that stretch reads HQGQSPRNSWDRGTSVF. Residue S426 is modified to Phosphoserine.

The protein belongs to the krueppel C2H2-type zinc-finger protein family. As to expression, highly expressed in skeletal muscle, moderate expression in heart, liver, and pancreas, lower expression in placenta, no expression seen in brain, lung, and kidney.

It is found in the nucleus. Its function is as follows. Transcriptional activator. Activates transcriptional activities of SRE and AP-1. The chain is Zinc finger protein 641 (ZNF641) from Homo sapiens (Human).